The sequence spans 106 residues: Iron-sulfur cluster assembly protein CyaY (106 aa).

It belongs to the frataxin family.

In terms of biological role, involved in iron-sulfur (Fe-S) cluster assembly. May act as a regulator of Fe-S biogenesis. The sequence is that of Iron-sulfur cluster assembly protein CyaY from Dickeya chrysanthemi (Pectobacterium chrysanthemi).